A 286-amino-acid polypeptide reads, in one-letter code: 2,3,4,5-tetrahydropyridine-2,6-dicarboxylate N-succinyltransferase (286 aa).

It belongs to the transferase hexapeptide repeat family.

The protein localises to the cytoplasm. It carries out the reaction (S)-2,3,4,5-tetrahydrodipicolinate + succinyl-CoA + H2O = (S)-2-succinylamino-6-oxoheptanedioate + CoA. The protein operates within amino-acid biosynthesis; L-lysine biosynthesis via DAP pathway; LL-2,6-diaminopimelate from (S)-tetrahydrodipicolinate (succinylase route): step 1/3. The chain is 2,3,4,5-tetrahydropyridine-2,6-dicarboxylate N-succinyltransferase from Rhizobium leguminosarum bv. trifolii (strain WSM2304).